A 368-amino-acid polypeptide reads, in one-letter code: tRNA-specific 2-thiouridylase MnmA (368 aa).

Residues 12-19 (AMSGGVDS) and Met-38 contribute to the ATP site. The interval 98–100 (NPD) is interaction with target base in tRNA. Cys-103 serves as the catalytic Nucleophile. Cys-103 and Cys-200 form a disulfide bridge. Gly-128 is a binding site for ATP. The interaction with tRNA stretch occupies residues 150 to 152 (KDQ). Residue Cys-200 is the Cysteine persulfide intermediate of the active site. The interval 312–313 (RY) is interaction with tRNA.

The protein belongs to the MnmA/TRMU family. As to quaternary structure, interacts with TusE.

It localises to the cytoplasm. The enzyme catalyses S-sulfanyl-L-cysteinyl-[protein] + uridine(34) in tRNA + AH2 + ATP = 2-thiouridine(34) in tRNA + L-cysteinyl-[protein] + A + AMP + diphosphate + H(+). In terms of biological role, catalyzes the 2-thiolation of uridine at the wobble position (U34) of tRNA(Lys), tRNA(Glu) and tRNA(Gln), leading to the formation of s(2)U34, the first step of tRNA-mnm(5)s(2)U34 synthesis. Sulfur is provided by IscS, via a sulfur-relay system. Binds ATP and its substrate tRNAs. In Buchnera aphidicola subsp. Acyrthosiphon pisum (strain APS) (Acyrthosiphon pisum symbiotic bacterium), this protein is tRNA-specific 2-thiouridylase MnmA.